The following is a 159-amino-acid chain: Putative 4-hydroxy-4-methyl-2-oxoglutarate aldolase (159 aa).

Residues 75–78 and R97 contribute to the substrate site; that span reads GDQL. D98 is a binding site for a divalent metal cation.

It belongs to the class II aldolase/RraA-like family. Homotrimer. A divalent metal cation serves as cofactor.

It catalyses the reaction 4-hydroxy-4-methyl-2-oxoglutarate = 2 pyruvate. The catalysed reaction is oxaloacetate + H(+) = pyruvate + CO2. In terms of biological role, catalyzes the aldol cleavage of 4-hydroxy-4-methyl-2-oxoglutarate (HMG) into 2 molecules of pyruvate. Also contains a secondary oxaloacetate (OAA) decarboxylase activity due to the common pyruvate enolate transition state formed following C-C bond cleavage in the retro-aldol and decarboxylation reactions. This Aromatoleum aromaticum (strain DSM 19018 / LMG 30748 / EbN1) (Azoarcus sp. (strain EbN1)) protein is Putative 4-hydroxy-4-methyl-2-oxoglutarate aldolase.